The chain runs to 133 residues: Small ribosomal subunit protein uS9 (133 aa).

The segment covering 102-113 (KVEGYLSRDPRA) has biased composition (basic and acidic residues). The disordered stretch occupies residues 102-133 (KVEGYLSRDPRAKERRKYGLKKARKAPQFSKR). Basic residues predominate over residues 114-133 (KERRKYGLKKARKAPQFSKR).

It belongs to the universal ribosomal protein uS9 family.

This Gloeobacter violaceus (strain ATCC 29082 / PCC 7421) protein is Small ribosomal subunit protein uS9.